The primary structure comprises 180 residues: Geminin homolog (180 aa).

Polar residues predominate over residues 1 to 27; the sequence is MSRIGLQQLNNSARNSPFGSEKATGTK. The segment at 1–29 is disordered; that stretch reads MSRIGLQQLNNSARNSPFGSEKATGTKQI.

The protein belongs to the geminin family. In terms of assembly, homodimer. Interacts with cdt-1; the interaction most likely inhibits the ability of cdt-1 to load the mini-chromosome maintenance (MCM) complex onto DNA and therefore reduces DNA replication licensing activity. Interacts with nob-1 and ceh-32.

Its subcellular location is the cytoplasm. The protein localises to the nucleus. Functionally, inhibits DNA replication by binding to the DNA replication licensing factor cdt-1. Its interaction with cdt-1 prevents the cdt-1 loading of the mini-chromosome maintenance (MCM) complex onto DNA and therefore DNA replication licencing. This chain is Geminin homolog, found in Caenorhabditis elegans.